The primary structure comprises 412 residues: NADH-ubiquinone oxidoreductase 49 kDa subunit (412 aa).

This sequence belongs to the complex I 49 kDa subunit family.

It localises to the hydrogenosome. It catalyses the reaction a ubiquinone + NADH + 5 H(+)(in) = a ubiquinol + NAD(+) + 4 H(+)(out). Its function is as follows. Transfer of electrons from NADH to the respiratory chain. The immediate electron acceptor for the enzyme is believed to be ubiquinone. Component of the iron-sulfur (IP) fragment of the enzyme. The polypeptide is NADH-ubiquinone oxidoreductase 49 kDa subunit (nad7) (Nyctotherus ovalis).